The following is a 189-amino-acid chain: Large ribosomal subunit protein bL17 (189 aa).

The protein belongs to the bacterial ribosomal protein bL17 family. As to quaternary structure, part of the 50S ribosomal subunit. Contacts protein L32.

This Rhodococcus jostii (strain RHA1) protein is Large ribosomal subunit protein bL17.